A 512-amino-acid polypeptide reads, in one-letter code: GMP synthase [glutamine-hydrolyzing] (512 aa).

Positions 3–196 (NILILDFGSQ…VKHICQTSET (194 aa)) constitute a Glutamine amidotransferase type-1 domain. C80 serves as the catalytic Nucleophile. Residues H169 and E171 contribute to the active site. The 191-residue stretch at 197–387 (WKIETIEKQL…LGLPDVLISR (191 aa)) folds into the GMPS ATP-PPase domain. 225–231 (SGGVDSS) serves as a coordination point for ATP.

Homodimer.

It catalyses the reaction XMP + L-glutamine + ATP + H2O = GMP + L-glutamate + AMP + diphosphate + 2 H(+). The protein operates within purine metabolism; GMP biosynthesis; GMP from XMP (L-Gln route): step 1/1. Functionally, catalyzes the synthesis of GMP from XMP. In Chlamydia muridarum (strain MoPn / Nigg), this protein is GMP synthase [glutamine-hydrolyzing] (guaA).